We begin with the raw amino-acid sequence, 212 residues long: Probable transaldolase (212 aa).

Lysine 84 functions as the Schiff-base intermediate with substrate in the catalytic mechanism.

The protein belongs to the transaldolase family. Type 3B subfamily.

The protein localises to the cytoplasm. The catalysed reaction is D-sedoheptulose 7-phosphate + D-glyceraldehyde 3-phosphate = D-erythrose 4-phosphate + beta-D-fructose 6-phosphate. Its pathway is carbohydrate degradation; pentose phosphate pathway; D-glyceraldehyde 3-phosphate and beta-D-fructose 6-phosphate from D-ribose 5-phosphate and D-xylulose 5-phosphate (non-oxidative stage): step 2/3. Functionally, transaldolase is important for the balance of metabolites in the pentose-phosphate pathway. This is Probable transaldolase from Bacillus velezensis (strain DSM 23117 / BGSC 10A6 / LMG 26770 / FZB42) (Bacillus amyloliquefaciens subsp. plantarum).